We begin with the raw amino-acid sequence, 214 residues long: Pyridoxine/pyridoxamine 5'-phosphate oxidase (214 aa).

Substrate contacts are provided by residues 8–11 and Lys66; that span reads RTNY. FMN is bound by residues 61–66, 76–77, Arg82, Lys83, and Gln105; these read RIVLIK and FT. Residues Tyr123, Arg127, and Ser131 each contribute to the substrate site. FMN contacts are provided by residues 140–141 and Trp184; that span reads QS. 190–192 provides a ligand contact to substrate; it reads RLH. Arg194 provides a ligand contact to FMN.

The protein belongs to the pyridoxamine 5'-phosphate oxidase family. As to quaternary structure, homodimer. Requires FMN as cofactor.

It carries out the reaction pyridoxamine 5'-phosphate + O2 + H2O = pyridoxal 5'-phosphate + H2O2 + NH4(+). The enzyme catalyses pyridoxine 5'-phosphate + O2 = pyridoxal 5'-phosphate + H2O2. The protein operates within cofactor metabolism; pyridoxal 5'-phosphate salvage; pyridoxal 5'-phosphate from pyridoxamine 5'-phosphate: step 1/1. It participates in cofactor metabolism; pyridoxal 5'-phosphate salvage; pyridoxal 5'-phosphate from pyridoxine 5'-phosphate: step 1/1. Catalyzes the oxidation of either pyridoxine 5'-phosphate (PNP) or pyridoxamine 5'-phosphate (PMP) into pyridoxal 5'-phosphate (PLP). The protein is Pyridoxine/pyridoxamine 5'-phosphate oxidase of Burkholderia mallei (strain NCTC 10247).